Reading from the N-terminus, the 1434-residue chain is Probable ATP-dependent RNA helicase spindle-E (1434 aa).

The segment at 66–86 (VGGPSNTKRTKTLDELESDDD) is disordered. The 168-residue stretch at 127-294 (MKAIKENPVV…FASCKSMPPV (168 aa)) folds into the Helicase ATP-binding domain. 140–147 (GETGCGKT) is a binding site for ATP. The DEAH box signature appears at 240-243 (DEVH). Positions 354–526 (QSEQSYEEAK…SSVLKAKELD (173 aa)) constitute a Helicase C-terminal domain. Positions 938–1001 (ASAITKGLQL…RLMRHELRRD (64 aa)) constitute a Tudor domain.

Belongs to the DEAD box helicase family. DEAH subfamily.

It localises to the cytoplasm. It carries out the reaction ATP + H2O = ADP + phosphate + H(+). Functionally, probable ATP-binding RNA helicase which plays a central role during spermatogenesis and oogenesis by repressing transposable elements and preventing their mobilization, which is essential for the germline integrity. Acts via the piRNA metabolic process, which mediates the repression of transposable elements during meiosis by forming complexes composed of piRNAs and Piwi and govern the methylation and subsequent repression of transposons. Involved in the repression of LTR retrotransposon copia. Also involved in telomere regulation by repressing specialized telomeric retroelements HeT-A, TAHRE, and TART; Drosophila telomeres being maintained by transposition of specialized telomeric retroelements. Involved in telomeric trans-silencing, a repression mechanism by which a transposon or a transgene inserted in subtelomeric heterochromatin has the capacity to repress in trans in the female germline, a homologous transposon, or transgene located in euchromatin. Involved in the repression of testis-expressed Stellate genes by the homologous Su(Ste) repeats. Required for anteroposterior and dorsoventral axis formation during oogenesis. This chain is Probable ATP-dependent RNA helicase spindle-E (spn-E), found in Drosophila grimshawi (Hawaiian fruit fly).